The sequence spans 404 residues: uncharacterized protein (404 aa).

Positions 69, 75, 78, and 166 each coordinate [4Fe-4S] cluster. S-adenosyl-L-methionine-binding residues include glutamine 226, tyrosine 253, glutamate 274, and aspartate 334. The Nucleophile role is filled by cysteine 361.

This sequence belongs to the class I-like SAM-binding methyltransferase superfamily. RNA M5U methyltransferase family.

This is an uncharacterized protein from Treponema denticola (strain ATCC 35405 / DSM 14222 / CIP 103919 / JCM 8153 / KCTC 15104).